The chain runs to 205 residues: Probable thymidylate kinase (205 aa).

10 to 17 serves as a coordination point for ATP; sequence GIDGSGKT.

This sequence belongs to the thymidylate kinase family.

The enzyme catalyses dTMP + ATP = dTDP + ADP. The chain is Probable thymidylate kinase (tmk) from Pyrococcus abyssi (strain GE5 / Orsay).